A 389-amino-acid chain; its full sequence is Flap endonuclease 1 (389 aa).

Positions 1 to 105 are N-domain; that stretch reads MGIKGLNKLL…GELAKRKERR (105 aa). Asp34 serves as a coordination point for Mg(2+). Arg47 and Arg71 together coordinate DNA. Residues Asp87, Glu170, Glu172, Asp191, and Asp193 each coordinate Mg(2+). An I-domain region spans residues 134–265; it reads DVTRFEKRTV…QTALKLMKEH (132 aa). Position 170 (Glu170) interacts with DNA. DNA contacts are provided by Gly243 and Asp245. Asp245 provides a ligand contact to Mg(2+). Residues 351–359 are interaction with PCNA; the sequence is PQARLDGFF. Positions 360-389 are disordered; sequence KVMPKEGGEKRKADDKKTKGKKPATKKAKK. Positions 362–376 are enriched in basic and acidic residues; sequence MPKEGGEKRKADDKK. The segment covering 377–389 has biased composition (basic residues); it reads TKGKKPATKKAKK.

This sequence belongs to the XPG/RAD2 endonuclease family. FEN1 subfamily. As to quaternary structure, interacts with PCNA. Three molecules of FEN1 bind to one PCNA trimer with each molecule binding to one PCNA monomer. PCNA stimulates the nuclease activity without altering cleavage specificity. The cofactor is Mg(2+). In terms of processing, phosphorylated. Phosphorylation upon DNA damage induces relocalization to the nuclear plasma.

Its subcellular location is the nucleus. The protein localises to the nucleolus. It is found in the nucleoplasm. It localises to the mitochondrion. Structure-specific nuclease with 5'-flap endonuclease and 5'-3' exonuclease activities involved in DNA replication and repair. During DNA replication, cleaves the 5'-overhanging flap structure that is generated by displacement synthesis when DNA polymerase encounters the 5'-end of a downstream Okazaki fragment. It enters the flap from the 5'-end and then tracks to cleave the flap base, leaving a nick for ligation. Also involved in the long patch base excision repair (LP-BER) pathway, by cleaving within the apurinic/apyrimidinic (AP) site-terminated flap. Acts as a genome stabilization factor that prevents flaps from equilibrating into structures that lead to duplications and deletions. Also possesses 5'-3' exonuclease activity on nicked or gapped double-stranded DNA, and exhibits RNase H activity. Also involved in replication and repair of rDNA and in repairing mitochondrial DNA. This is Flap endonuclease 1 from Yarrowia lipolytica (strain CLIB 122 / E 150) (Yeast).